The chain runs to 493 residues: Glutamate--tRNA ligase (493 aa).

Residues 9 to 19 (PSPTGDPHVGT) carry the 'HIGH' region motif. The 'KMSKS' region signature appears at 249 to 253 (KLSKR). ATP is bound at residue lysine 252.

This sequence belongs to the class-I aminoacyl-tRNA synthetase family. Glutamate--tRNA ligase type 1 subfamily. Monomer.

It is found in the cytoplasm. It carries out the reaction tRNA(Glu) + L-glutamate + ATP = L-glutamyl-tRNA(Glu) + AMP + diphosphate. In terms of biological role, catalyzes the attachment of glutamate to tRNA(Glu) in a two-step reaction: glutamate is first activated by ATP to form Glu-AMP and then transferred to the acceptor end of tRNA(Glu). The sequence is that of Glutamate--tRNA ligase from Marinobacter nauticus (strain ATCC 700491 / DSM 11845 / VT8) (Marinobacter aquaeolei).